We begin with the raw amino-acid sequence, 398 residues long: 8-amino-7-oxononanoate synthase (398 aa).

Arginine 23 provides a ligand contact to substrate. A pyridoxal 5'-phosphate-binding site is contributed by 110–111; that stretch reads GY. Residue histidine 135 coordinates substrate. Pyridoxal 5'-phosphate is bound by residues serine 181, histidine 209, and threonine 238. Residue lysine 241 is modified to N6-(pyridoxal phosphate)lysine. Threonine 355 is a substrate binding site.

The protein belongs to the class-II pyridoxal-phosphate-dependent aminotransferase family. BioF subfamily. Homodimer. Requires pyridoxal 5'-phosphate as cofactor.

It carries out the reaction 6-carboxyhexanoyl-[ACP] + L-alanine + H(+) = (8S)-8-amino-7-oxononanoate + holo-[ACP] + CO2. It participates in cofactor biosynthesis; biotin biosynthesis. Its function is as follows. Catalyzes the decarboxylative condensation of pimeloyl-[acyl-carrier protein] and L-alanine to produce 8-amino-7-oxononanoate (AON), [acyl-carrier protein], and carbon dioxide. The polypeptide is 8-amino-7-oxononanoate synthase (Cellvibrio japonicus (strain Ueda107) (Pseudomonas fluorescens subsp. cellulosa)).